A 123-amino-acid chain; its full sequence is Large ribosomal subunit protein bL20 (123 aa).

It belongs to the bacterial ribosomal protein bL20 family.

Functionally, binds directly to 23S ribosomal RNA and is necessary for the in vitro assembly process of the 50S ribosomal subunit. It is not involved in the protein synthesizing functions of that subunit. In Ehrlichia ruminantium (strain Gardel), this protein is Large ribosomal subunit protein bL20.